The chain runs to 916 residues: Protein translocase subunit SecA (916 aa).

ATP-binding positions include Gln-87, 105–109, and Asp-507; that span reads GEGKT. The Zn(2+) site is built by Cys-900, Cys-902, Cys-911, and His-912.

The protein belongs to the SecA family. As to quaternary structure, monomer and homodimer. Part of the essential Sec protein translocation apparatus which comprises SecA, SecYEG and auxiliary proteins SecDF-YajC and YidC. Zn(2+) is required as a cofactor.

It localises to the cell inner membrane. The protein resides in the cytoplasm. It catalyses the reaction ATP + H2O + cellular proteinSide 1 = ADP + phosphate + cellular proteinSide 2.. Functionally, part of the Sec protein translocase complex. Interacts with the SecYEG preprotein conducting channel. Has a central role in coupling the hydrolysis of ATP to the transfer of proteins into and across the cell membrane, serving both as a receptor for the preprotein-SecB complex and as an ATP-driven molecular motor driving the stepwise translocation of polypeptide chains across the membrane. This Neisseria gonorrhoeae (strain NCCP11945) protein is Protein translocase subunit SecA.